Consider the following 320-residue polypeptide: Malate dehydrogenase (320 aa).

Residues 10 to 15 (GAGQIG) and Asp-34 each bind NAD(+). Residues Arg-83 and Arg-89 each coordinate substrate. NAD(+) contacts are provided by residues Asn-96 and 119 to 121 (ITN). 2 residues coordinate substrate: Asn-121 and Arg-152. His-176 (proton acceptor) is an active-site residue.

It belongs to the LDH/MDH superfamily. MDH type 3 family.

The enzyme catalyses (S)-malate + NAD(+) = oxaloacetate + NADH + H(+). Catalyzes the reversible oxidation of malate to oxaloacetate. The sequence is that of Malate dehydrogenase from Methylobacterium sp. (strain 4-46).